The sequence spans 429 residues: Enolase (429 aa).

(2R)-2-phosphoglycerate is bound at residue glutamine 164. The active-site Proton donor is the glutamate 206. Residues aspartate 243, glutamate 286, and aspartate 313 each coordinate Mg(2+). Residues lysine 338, arginine 367, serine 368, and lysine 389 each contribute to the (2R)-2-phosphoglycerate site. The Proton acceptor role is filled by lysine 338.

The protein belongs to the enolase family. The cofactor is Mg(2+).

It is found in the cytoplasm. The protein resides in the secreted. The protein localises to the cell surface. It catalyses the reaction (2R)-2-phosphoglycerate = phosphoenolpyruvate + H2O. Its pathway is carbohydrate degradation; glycolysis; pyruvate from D-glyceraldehyde 3-phosphate: step 4/5. Its function is as follows. Catalyzes the reversible conversion of 2-phosphoglycerate (2-PG) into phosphoenolpyruvate (PEP). It is essential for the degradation of carbohydrates via glycolysis. In Thermosipho africanus (strain TCF52B), this protein is Enolase.